A 240-amino-acid polypeptide reads, in one-letter code: MAYKRVLLKLSGEALMGDASYGIDPAVVQRIAQEIATVVQDGFQVAIVVGGGNIFRGIKGAAAGMERATADYVGMIATVMNAITLQDALEQLQVPTRVQTAIAMQEVAEPYIRRRAIRHLEKGRVVIFGSGTGNPFFTTDTTAALRAAEINADVVFKATKVDGVYDSDPKLNPQARRFTTLNYNYVLNHELGVMDSTAIALCKDNSIPIVVFDLFGEGNIRRAVQGEDIGTTVGGSCEVS.

An ATP-binding site is contributed by 9 to 12; it reads KLSG. Glycine 51 is a binding site for UMP. Residues glycine 52 and arginine 56 each contribute to the ATP site. UMP contacts are provided by residues aspartate 71 and 132–139; that span reads TGNPFFTT. Positions 159, 165, and 168 each coordinate ATP.

Belongs to the UMP kinase family. As to quaternary structure, homohexamer.

Its subcellular location is the cytoplasm. It carries out the reaction UMP + ATP = UDP + ADP. It participates in pyrimidine metabolism; CTP biosynthesis via de novo pathway; UDP from UMP (UMPK route): step 1/1. Inhibited by UTP. Its function is as follows. Catalyzes the reversible phosphorylation of UMP to UDP. In Synechococcus elongatus (strain ATCC 33912 / PCC 7942 / FACHB-805) (Anacystis nidulans R2), this protein is Uridylate kinase.